The chain runs to 514 residues: 6-phosphofructo-2-kinase/fructose-2,6-bisphosphatase 3 (514 aa).

The 6-phosphofructo-2-kinase stretch occupies residues 1 to 245 (MPLELTQSRV…VYYLMNIHVQ (245 aa)). 42–50 (GLPARGKTY) lines the ATP pocket. Beta-D-fructose 6-phosphate contacts are provided by Arg75 and Arg99. Residue Asp125 is part of the active site. Residues Thr127 and Arg133 each coordinate beta-D-fructose 6-phosphate. Residue Cys155 is part of the active site. Residue 164 to 169 (NIMEVK) participates in ATP binding. Residues Lys169, Arg190, and Tyr194 each contribute to the beta-D-fructose 6-phosphate site. The interval 246-514 (PRTIYLCRHG…QPLLGQACLT (269 aa)) is fructose-2,6-bisphosphatase. Arg253 serves as a coordination point for beta-D-fructose 2,6-bisphosphate. The active-site Tele-phosphohistidine intermediate is the His254. Asn260 and Gly266 together coordinate beta-D-fructose 2,6-bisphosphate. Glu323 acts as the Proton donor/acceptor in catalysis. Beta-D-fructose 2,6-bisphosphate contacts are provided by Tyr334, Arg348, Lys352, Tyr363, Gln389, and Arg393. 345–348 (YALR) lines the ATP pocket. ATP is bound by residues 389-393 (QAVLR) and Tyr425. A disordered region spans residues 444 to 475 (ERSEDAKKGPNPLMRRNSVTPLASPEPTKKPR). Residue Ser461 is modified to Phosphoserine; by AMPK and PKA. The residue at position 463 (Thr463) is a Phosphothreonine. Residue Ser467 is modified to Phosphoserine. Thr471 is modified (phosphothreonine; by PKC).

It in the C-terminal section; belongs to the phosphoglycerate mutase family. In terms of assembly, homodimer. Forms a heterodimer with PFKFB2. In terms of processing, phosphorylation by AMPK stimulates activity.

The enzyme catalyses beta-D-fructose 2,6-bisphosphate + H2O = beta-D-fructose 6-phosphate + phosphate. It catalyses the reaction beta-D-fructose 6-phosphate + ATP = beta-D-fructose 2,6-bisphosphate + ADP + H(+). In terms of biological role, catalyzes both the synthesis and degradation of fructose 2,6-bisphosphate. The sequence is that of 6-phosphofructo-2-kinase/fructose-2,6-bisphosphatase 3 (PFKFB3) from Pongo abelii (Sumatran orangutan).